A 725-amino-acid chain; its full sequence is Exocyst complex component 8 (725 aa).

Phosphoserine is present on Ser-19. The disordered stretch occupies residues 137–159; it reads AGFFSTPGGASRDGSGPGEEGKQ. Position 142 is a phosphothreonine (Thr-142). Residues 182–282 enclose the PH domain; that stretch reads YLVYNGDLVE…WLEVLEDTKR (101 aa). The disordered stretch occupies residues 285 to 328; sequence SEKRRREQEEAAAPRGPPQVTSKATNPFEDDEEEEPAVPEVEEE. The segment covering 312–328 has biased composition (acidic residues); that stretch reads FEDDEEEEPAVPEVEEE.

This sequence belongs to the EXO84 family. In terms of assembly, the exocyst complex is composed of EXOC1, EXOC2, EXOC3, EXOC4, EXOC5, EXOC6, EXOC7 and EXOC8. Interacts (via PH domain) with GTP-bound RALA and RALB. Interacts with SH3BP1; required for the localization of both SH3BP1 and the exocyst to the leading edge of migrating cells.

It is found in the cytoplasm. Its subcellular location is the perinuclear region. The protein resides in the cell projection. The protein localises to the growth cone. Functionally, component of the exocyst complex involved in the docking of exocytic vesicles with fusion sites on the plasma membrane. In Homo sapiens (Human), this protein is Exocyst complex component 8 (EXOC8).